Reading from the N-terminus, the 195-residue chain is uncharacterized protein (195 aa).

This is an uncharacterized protein from Acidianus hospitalis (AFV-1).